The following is a 202-amino-acid chain: Large ribosomal subunit protein bL25 (202 aa).

It belongs to the bacterial ribosomal protein bL25 family. CTC subfamily. Part of the 50S ribosomal subunit; part of the 5S rRNA/L5/L18/L25 subcomplex. Contacts the 5S rRNA. Binds to the 5S rRNA independently of L5 and L18.

In terms of biological role, this is one of the proteins that binds to the 5S RNA in the ribosome where it forms part of the central protuberance. This is Large ribosomal subunit protein bL25 from Paramagnetospirillum magneticum (strain ATCC 700264 / AMB-1) (Magnetospirillum magneticum).